We begin with the raw amino-acid sequence, 527 residues long: Amine oxidase [flavin-containing] A (527 aa).

The residue at position 1 (Met-1) is an N-acetylmethionine. The Cytoplasmic segment spans residues 1–497 (MERQEKANNA…RTFWERNLPS (497 aa)). At Ser-383 the chain carries Phosphoserine. Cys-406 carries the S-8alpha-FAD cysteine modification. Residues 498-518 (VTGLLKIIGFSTSVTALWLAV) traverse the membrane as a helical; Anchor for type IV membrane protein segment. Topologically, residues 519 to 527 (YKFRLLTRS) are mitochondrial intermembrane. Residues 520-522 (KFR) form an interaction with membrane phospholipid headgroups region.

The protein belongs to the flavin monoamine oxidase family. In terms of assembly, monomer, homo- or heterodimer (containing two subunits of similar size). Each subunit contains a covalently bound flavin. Enzymatically active as monomer. Requires FAD as cofactor.

It is found in the mitochondrion outer membrane. It carries out the reaction a secondary aliphatic amine + O2 + H2O = a primary amine + an aldehyde + H2O2. The catalysed reaction is a primary methyl amine + O2 + H2O = an aldehyde + H2O2 + NH4(+). The enzyme catalyses (R)-adrenaline + O2 + H2O = (R)-3,4-dihydroxymandelaldehyde + methylamine + H2O2. It catalyses the reaction dopamine + O2 + H2O = 3,4-dihydroxyphenylacetaldehyde + H2O2 + NH4(+). It carries out the reaction tyramine + O2 + H2O = (4-hydroxyphenyl)acetaldehyde + H2O2 + NH4(+). The catalysed reaction is (R)-noradrenaline + O2 + H2O = (R)-3,4-dihydroxymandelaldehyde + H2O2 + NH4(+). The enzyme catalyses serotonin + O2 + H2O = (5-hydroxyindol-3-yl)acetaldehyde + H2O2 + NH4(+). It catalyses the reaction kynuramine + O2 + H2O = 3-(2-aminophenyl)-3-oxopropanal + H2O2 + NH4(+). It carries out the reaction tryptamine + O2 + H2O = indole-3-acetaldehyde + H2O2 + NH4(+). The catalysed reaction is 2-phenylethylamine + O2 + H2O = 2-phenylacetaldehyde + H2O2 + NH4(+). Catalyzes the oxidative deamination of primary and some secondary amine such as neurotransmitters, with concomitant reduction of oxygen to hydrogen peroxide and has important functions in the metabolism of neuroactive and vasoactive amines in the central nervous system and peripheral tissues. Preferentially oxidizes serotonin. Also catalyzes the oxidative deamination of kynuramine to 3-(2-aminophenyl)-3-oxopropanal that can spontaneously condense to 4-hydroxyquinoline. The protein is Amine oxidase [flavin-containing] A of Sus scrofa (Pig).